The chain runs to 466 residues: tRNA modification GTPase MnmE (466 aa).

The (6S)-5-formyl-5,6,7,8-tetrahydrofolate site is built by arginine 23, glutamate 86, and lysine 125. A TrmE-type G domain is found at glycine 221–asparagine 388. Asparagine 231 lines the K(+) pocket. GTP contacts are provided by residues asparagine 231 to threonine 236, serine 250 to threonine 256, and aspartate 275 to glycine 278. Position 235 (serine 235) interacts with Mg(2+). K(+) contacts are provided by serine 250, isoleucine 252, and threonine 255. Threonine 256 contacts Mg(2+). Lysine 466 contacts (6S)-5-formyl-5,6,7,8-tetrahydrofolate.

The protein belongs to the TRAFAC class TrmE-Era-EngA-EngB-Septin-like GTPase superfamily. TrmE GTPase family. In terms of assembly, homodimer. Heterotetramer of two MnmE and two MnmG subunits. It depends on K(+) as a cofactor.

It is found in the cytoplasm. Functionally, exhibits a very high intrinsic GTPase hydrolysis rate. Involved in the addition of a carboxymethylaminomethyl (cmnm) group at the wobble position (U34) of certain tRNAs, forming tRNA-cmnm(5)s(2)U34. This Flavobacterium johnsoniae (strain ATCC 17061 / DSM 2064 / JCM 8514 / BCRC 14874 / CCUG 350202 / NBRC 14942 / NCIMB 11054 / UW101) (Cytophaga johnsonae) protein is tRNA modification GTPase MnmE.